The following is a 107-amino-acid chain: Large ribosomal subunit protein P1 (107 aa).

Positions 67–107 (GAAPAAAAPAAGGAPAAGAAPKKEEKKEPSEEEDMGFSLFD) are disordered. A compositionally biased stretch (low complexity) spans 69–86 (APAAAAPAAGGAPAAGAA).

Belongs to the eukaryotic ribosomal protein P1/P2 family. As to quaternary structure, P1 and P2 exist as dimers at the large ribosomal subunit.

Functionally, plays an important role in the elongation step of protein synthesis. The protein is Large ribosomal subunit protein P1 of Chlamydomonas reinhardtii (Chlamydomonas smithii).